The primary structure comprises 751 residues: Probable alpha-galactosidase C (751 aa).

Positions 1-27 (MFGSPKRAALAAASLLAIFGNGPSVMA) are cleaved as a signal peptide. N-linked (GlcNAc...) asparagine glycosylation is found at Asn49, Asn57, Asn162, Asn186, Asn194, Asn366, Asn433, Asn452, and Asn500. Asp510 acts as the Nucleophile in catalysis. The active-site Proton donor is the Asp572. Asn720 carries N-linked (GlcNAc...) asparagine glycosylation.

It belongs to the glycosyl hydrolase 36 family. In terms of assembly, homotetramer. It depends on Mg(2+) as a cofactor. NAD(+) serves as cofactor.

It is found in the secreted. It catalyses the reaction Hydrolysis of terminal, non-reducing alpha-D-galactose residues in alpha-D-galactosides, including galactose oligosaccharides, galactomannans and galactolipids.. In terms of biological role, hydrolyzes a variety of simple alpha-D-galactoside as well as more complex molecules such as oligosaccharides and polysaccharides. The polypeptide is Probable alpha-galactosidase C (aglC) (Aspergillus flavus (strain ATCC 200026 / FGSC A1120 / IAM 13836 / NRRL 3357 / JCM 12722 / SRRC 167)).